Reading from the N-terminus, the 141-residue chain is Large ribosomal subunit protein uL11 (141 aa).

Belongs to the universal ribosomal protein uL11 family. As to quaternary structure, part of the ribosomal stalk of the 50S ribosomal subunit. Interacts with L10 and the large rRNA to form the base of the stalk. L10 forms an elongated spine to which L12 dimers bind in a sequential fashion forming a multimeric L10(L12)X complex. Post-translationally, one or more lysine residues are methylated.

Its function is as follows. Forms part of the ribosomal stalk which helps the ribosome interact with GTP-bound translation factors. This is Large ribosomal subunit protein uL11 from Roseiflexus castenholzii (strain DSM 13941 / HLO8).